Consider the following 209-residue polypeptide: MRDPIETVMNLVPMVVEQTNRGERAYDIFSRLLKERIIFVNGPVEDGMSMLVCAQLLFLEAENPKKEINMYINSPGGVVTSGMAIYDTMQFIRPPVSTLCMGQAASMGSLLLTAGATGHRYALPNARIMVHQPSGGFQGQASDIERHAQDIIKMKRRLNEIYVKHTGRDYDTIERTLDRDHFMTAQEALEFGLIDKVVEARDVSADESK.

Catalysis depends on Ser-106, which acts as the Nucleophile. The active site involves His-131.

Belongs to the peptidase S14 family. Fourteen ClpP subunits assemble into 2 heptameric rings which stack back to back to give a disk-like structure with a central cavity, resembling the structure of eukaryotic proteasomes.

The protein localises to the cytoplasm. The catalysed reaction is Hydrolysis of proteins to small peptides in the presence of ATP and magnesium. alpha-casein is the usual test substrate. In the absence of ATP, only oligopeptides shorter than five residues are hydrolyzed (such as succinyl-Leu-Tyr-|-NHMec, and Leu-Tyr-Leu-|-Tyr-Trp, in which cleavage of the -Tyr-|-Leu- and -Tyr-|-Trp bonds also occurs).. Its function is as follows. Cleaves peptides in various proteins in a process that requires ATP hydrolysis. Has a chymotrypsin-like activity. Plays a major role in the degradation of misfolded proteins. This chain is ATP-dependent Clp protease proteolytic subunit, found in Brucella canis (strain ATCC 23365 / NCTC 10854 / RM-666).